A 285-amino-acid polypeptide reads, in one-letter code: Cytosolic Fe-S cluster assembly factor CFD1 (285 aa).

ATP is bound at residue 30–37 (GKGGVGKS). Residues C206 and C209 each coordinate [4Fe-4S] cluster.

The protein belongs to the Mrp/NBP35 ATP-binding proteins family. NUBP2/CFD1 subfamily. Heterotetramer of 2 NBP35 and 2 CFD1 chains. It depends on [4Fe-4S] cluster as a cofactor.

It localises to the cytoplasm. Functionally, component of the cytosolic iron-sulfur (Fe/S) protein assembly (CIA) machinery. Required for maturation of extramitochondrial Fe-S proteins. The NBP35-CFD1 heterotetramer forms a Fe-S scaffold complex, mediating the de novo assembly of an Fe-S cluster and its transfer to target apoproteins. Required for biogenesis and export of both ribosomal subunits, which may reflect a role in assembly of the Fe/S clusters in RLI1, a protein which performs rRNA processing and ribosome export. The chain is Cytosolic Fe-S cluster assembly factor CFD1 from Candida glabrata (strain ATCC 2001 / BCRC 20586 / JCM 3761 / NBRC 0622 / NRRL Y-65 / CBS 138) (Yeast).